The chain runs to 511 residues: DNA nucleotidylexotransferase (511 aa).

The disordered stretch occupies residues 1–26 (MDPLQTAHAGPRKKRPRQTGASMAST). The Nuclear localization signal signature appears at 11 to 17 (PRKKRPR). One can recognise a BRCT domain in the interval 27–124 (PQDVRFQDLV…KPVETTGKHQ (98 aa)). At S134 the chain carries Phosphoserine. The segment at 151-511 (SQYACQRRTT…DYIEPSERNA (361 aa)) is mediates interaction with DNTTIP2. The interval 258–262 (VGLKT) is involved in DNA binding. A 2'-deoxyribonucleoside 5'-triphosphate is bound by residues 333-338 (GFRRGK) and 342-345 (HDVD). D343, D345, and D435 together coordinate Mg(2+). 450–451 (GW) serves as a coordination point for a 2'-deoxyribonucleoside 5'-triphosphate.

Belongs to the DNA polymerase type-X family. In terms of assembly, interacts with PRP19 and DNTTIP1. Forms a ternary complex with DNTTIP2 and core histone. Released from this complex by PCNA. Interacts with TRERF1. Mg(2+) serves as cofactor.

The protein localises to the nucleus. The enzyme catalyses DNA(n) + a 2'-deoxyribonucleoside 5'-triphosphate = DNA(n+1) + diphosphate. Functionally, template-independent DNA polymerase which catalyzes the random addition of deoxynucleoside 5'-triphosphate to the 3'-end of a DNA initiator. One of the in vivo functions of this enzyme is the addition of nucleotides at the junction (N region) of rearranged Ig heavy chain and T-cell receptor gene segments during the maturation of B- and T-cells. The polypeptide is DNA nucleotidylexotransferase (DNTT) (Eulemur macaco (Black lemur)).